A 291-amino-acid polypeptide reads, in one-letter code: 4-hydroxy-tetrahydrodipicolinate synthase (291 aa).

Threonine 45 lines the pyruvate pocket. Tyrosine 131 acts as the Proton donor/acceptor in catalysis. The active-site Schiff-base intermediate with substrate is lysine 159. Isoleucine 202 contacts pyruvate.

It belongs to the DapA family. Homotetramer; dimer of dimers.

It is found in the cytoplasm. It carries out the reaction L-aspartate 4-semialdehyde + pyruvate = (2S,4S)-4-hydroxy-2,3,4,5-tetrahydrodipicolinate + H2O + H(+). The protein operates within amino-acid biosynthesis; L-lysine biosynthesis via DAP pathway; (S)-tetrahydrodipicolinate from L-aspartate: step 3/4. Functionally, catalyzes the condensation of (S)-aspartate-beta-semialdehyde [(S)-ASA] and pyruvate to 4-hydroxy-tetrahydrodipicolinate (HTPA). This is 4-hydroxy-tetrahydrodipicolinate synthase from Methanosarcina barkeri (strain Fusaro / DSM 804).